The sequence spans 293 residues: TBC1 domain family member 7 (293 aa).

Positions P50–S231 constitute a Rab-GAP TBC domain.

As to quaternary structure, component of the TSC-TBC complex (also named Rhebulator complex), composed of 2 molecules of TSC1, 2 molecules of TSC2 and 1 molecule of TBC1D7. Interacts with TSC1 (via C-terminal half of the coiled-coil domain). Highly expressed in heart, and slightly in kidney, liver and placenta.

The protein localises to the lysosome membrane. It localises to the cytoplasmic vesicle. Its subcellular location is the cytoplasm. The protein resides in the cytosol. Functionally, non-catalytic component of the TSC-TBC complex, a multiprotein complex that acts as a negative regulator of the canonical mTORC1 complex, an evolutionarily conserved central nutrient sensor that stimulates anabolic reactions and macromolecule biosynthesis to promote cellular biomass generation and growth. The TSC-TBC complex acts as a GTPase-activating protein (GAP) for the small GTPase RHEB, a direct activator of the protein kinase activity of mTORC1. In absence of nutrients, the TSC-TBC complex inhibits mTORC1, thereby preventing phosphorylation of ribosomal protein S6 kinase (RPS6KB1 and RPS6KB2) and EIF4EBP1 (4E-BP1) by the mTORC1 signaling. The TSC-TBC complex is inactivated in response to nutrients, relieving inhibition of mTORC1. This chain is TBC1 domain family member 7, found in Homo sapiens (Human).